Consider the following 103-residue polypeptide: Small ribosomal subunit protein bS6c (103 aa).

It belongs to the bacterial ribosomal protein bS6 family.

The protein localises to the plastid. It localises to the chloroplast. In terms of biological role, binds together with bS18 to 16S ribosomal RNA. The polypeptide is Small ribosomal subunit protein bS6c (rps6) (Cyanidium caldarium (Red alga)).